A 90-amino-acid polypeptide reads, in one-letter code: Auxin-responsive protein SAUR19 (90 aa).

Belongs to the ARG7 family. Interacts with and inhibits PP2C-D subfamily of type 2C phosphatases such as PP2C67/PP2C-D1, PP2C64/PP2C-D5 and PP2C46/PP2C-D6.

Its subcellular location is the cell membrane. Functionally, provide a mechanistic link between auxin and plasma membrane H(+)-ATPases (PM H(+)-ATPases, e.g. AHA1 and AHA2), and triggers PM H(+)-ATPases activity by promoting phosphorylation of their C-terminal autoinhibitory domain as a result of PP2C-D subfamily of type 2C phosphatases inhibition, thus leading to the acidification of the apoplast and the facilitation of solutes and water uptake to drive cell expansion. Prevents the apical hook maintenance of etiolated seedlings. Functions as positive effectors of cell expansion through modulation of auxin transport. This is Auxin-responsive protein SAUR19 from Arabidopsis thaliana (Mouse-ear cress).